A 488-amino-acid chain; its full sequence is ATP synthase subunit beta (488 aa).

ATP is bound at residue glycine 164–threonine 171.

This sequence belongs to the ATPase alpha/beta chains family. F-type ATPases have 2 components, CF(1) - the catalytic core - and CF(0) - the membrane proton channel. CF(1) has five subunits: alpha(3), beta(3), gamma(1), delta(1), epsilon(1). CF(0) has four main subunits: a(1), b(1), b'(1) and c(9-12).

The protein resides in the cellular thylakoid membrane. The catalysed reaction is ATP + H2O + 4 H(+)(in) = ADP + phosphate + 5 H(+)(out). In terms of biological role, produces ATP from ADP in the presence of a proton gradient across the membrane. The catalytic sites are hosted primarily by the beta subunits. In Prochlorococcus marinus (strain MIT 9303), this protein is ATP synthase subunit beta.